Reading from the N-terminus, the 81-residue chain is Adipogenin (81 aa).

The helical transmembrane segment at 16 to 36 (FLASWLCLPVGLLLFLLIVWL) threads the bilayer.

Belongs to the adipogenin family.

Its subcellular location is the membrane. It localises to the nucleus. In terms of biological role, plays a role in stimulating adipocyte differentiation and development. The sequence is that of Adipogenin from Sus scrofa (Pig).